The sequence spans 75 residues: uncharacterized protein (75 aa).

The segment covering 1–14 (MNDNNDNNNNNKNI) has biased composition (low complexity). The disordered stretch occupies residues 1 to 30 (MNDNNDNNNNNKNIDNVDDDNDDNDKGKYK).

This is an uncharacterized protein from Dictyostelium discoideum (Social amoeba).